Reading from the N-terminus, the 343-residue chain is MSNTDKERAIAAALAQIEKSYGKGSVMKLGQRPNIDIEAVSTGSLGLDMALGIGGVPKGRIIEIFGPESSGKTTLTLHLIAEAQKKGGTCAFIDAEHALDPAYAKKLGVNIDELIISQPDTGEQALEITDTLIRSGGIDMVIIDSVAALVPKSEIEGEMGDAQMASQARLMSQALRKLTASISRTNCIAVFINQIRMKIGVMFGSPETTTGGNALKFYASVRIDIRRIGSIKDKEEVIGSQTKVKVVKNKVSPPFKTADFDIMYGSGISKEGEIIDLGVKLDIVEKSGSWFSYNNVRIGQGRENVKQYLKEHPQIANEIEKIIREKSSKITNMNLDQMEEEND.

66–73 provides a ligand contact to ATP; sequence GPESSGKT.

The protein belongs to the RecA family.

The protein resides in the cytoplasm. Its function is as follows. Can catalyze the hydrolysis of ATP in the presence of single-stranded DNA, the ATP-dependent uptake of single-stranded DNA by duplex DNA, and the ATP-dependent hybridization of homologous single-stranded DNAs. It interacts with LexA causing its activation and leading to its autocatalytic cleavage. The sequence is that of Protein RecA from Rickettsia canadensis (strain McKiel).